The following is a 949-amino-acid chain: AP-1 complex subunit beta-1 (949 aa).

Lys318 is modified (N6-acetyllysine). 3'-nitrotyrosine is present on Tyr574. The tract at residues 584–625 (GGRGVVHKSLPPRTASSESAESPETAPTGAPPGEQPDVIPAQ) is disordered. Residues 594–611 (PPRTASSESAESPETAPT) are compositionally biased toward low complexity.

The protein belongs to the adaptor complexes large subunit family. As to quaternary structure, adaptor protein complex 1 (AP-1) is a heterotetramer composed of two large adaptins (gamma-type subunit AP1G1 and beta-type subunit AP1B1), a medium adaptin (mu-type subunit AP1M1 or AP1M2) and a small adaptin (sigma-type subunit AP1S1 or AP1S2 or AP1S3). Widely expressed.

Its subcellular location is the golgi apparatus. It is found in the cytoplasmic vesicle. It localises to the clathrin-coated vesicle membrane. In terms of biological role, subunit of clathrin-associated adaptor protein complex 1 that plays a role in protein sorting in the late-Golgi/trans-Golgi network (TGN) and/or endosomes. The AP complexes mediate both the recruitment of clathrin to membranes and the recognition of sorting signals within the cytosolic tails of transmembrane cargo molecules. This is AP-1 complex subunit beta-1 (AP1B1) from Homo sapiens (Human).